We begin with the raw amino-acid sequence, 357 residues long: UDP-N-acetylglucosamine--N-acetylmuramyl-(pentapeptide) pyrophosphoryl-undecaprenol N-acetylglucosamine transferase (357 aa).

UDP-N-acetyl-alpha-D-glucosamine is bound by residues 11-13 (TGG), N123, R159, S187, I241, 260-265 (ALTVAE), and Q286.

Belongs to the glycosyltransferase 28 family. MurG subfamily.

It is found in the cell inner membrane. The enzyme catalyses di-trans,octa-cis-undecaprenyl diphospho-N-acetyl-alpha-D-muramoyl-L-alanyl-D-glutamyl-meso-2,6-diaminopimeloyl-D-alanyl-D-alanine + UDP-N-acetyl-alpha-D-glucosamine = di-trans,octa-cis-undecaprenyl diphospho-[N-acetyl-alpha-D-glucosaminyl-(1-&gt;4)]-N-acetyl-alpha-D-muramoyl-L-alanyl-D-glutamyl-meso-2,6-diaminopimeloyl-D-alanyl-D-alanine + UDP + H(+). Its pathway is cell wall biogenesis; peptidoglycan biosynthesis. In terms of biological role, cell wall formation. Catalyzes the transfer of a GlcNAc subunit on undecaprenyl-pyrophosphoryl-MurNAc-pentapeptide (lipid intermediate I) to form undecaprenyl-pyrophosphoryl-MurNAc-(pentapeptide)GlcNAc (lipid intermediate II). The protein is UDP-N-acetylglucosamine--N-acetylmuramyl-(pentapeptide) pyrophosphoryl-undecaprenol N-acetylglucosamine transferase of Aromatoleum aromaticum (strain DSM 19018 / LMG 30748 / EbN1) (Azoarcus sp. (strain EbN1)).